The primary structure comprises 336 residues: Ketol-acid reductoisomerase (NADP(+)) 1 (336 aa).

Positions 2–181 (AKVYYEKDVT…GATRAGVLET (180 aa)) constitute a KARI N-terminal Rossmann domain. NADP(+) contacts are provided by residues 25–28 (YGSQ), R48, S52, and 82–85 (DELQ). Residue H107 is part of the active site. G133 contacts NADP(+). One can recognise a KARI C-terminal knotted domain in the interval 182–327 (TFKEETETDL…RKLREMMPFV (146 aa)). Mg(2+) contacts are provided by D190, E194, E226, and E230. S251 is a binding site for substrate.

Belongs to the ketol-acid reductoisomerase family. The cofactor is Mg(2+).

The enzyme catalyses (2R)-2,3-dihydroxy-3-methylbutanoate + NADP(+) = (2S)-2-acetolactate + NADPH + H(+). It carries out the reaction (2R,3R)-2,3-dihydroxy-3-methylpentanoate + NADP(+) = (S)-2-ethyl-2-hydroxy-3-oxobutanoate + NADPH + H(+). It functions in the pathway amino-acid biosynthesis; L-isoleucine biosynthesis; L-isoleucine from 2-oxobutanoate: step 2/4. Its pathway is amino-acid biosynthesis; L-valine biosynthesis; L-valine from pyruvate: step 2/4. Involved in the biosynthesis of branched-chain amino acids (BCAA). Catalyzes an alkyl-migration followed by a ketol-acid reduction of (S)-2-acetolactate (S2AL) to yield (R)-2,3-dihydroxy-isovalerate. In the isomerase reaction, S2AL is rearranged via a Mg-dependent methyl migration to produce 3-hydroxy-3-methyl-2-ketobutyrate (HMKB). In the reductase reaction, this 2-ketoacid undergoes a metal-dependent reduction by NADPH to yield (R)-2,3-dihydroxy-isovalerate. This is Ketol-acid reductoisomerase (NADP(+)) 1 from Bacillus cereus (strain ATCC 10987 / NRS 248).